The following is a 44-amino-acid chain: Thymosin beta-10 (44 aa).

Composition is skewed to basic and acidic residues over residues 1-25 (MADK…ETQE) and 33-44 (ETIEQEKRSEIS). Positions 1 to 44 (MADKPDMGEIASFDKAKLKKTETQEKNTLPTKETIEQEKRSEIS) are disordered. At Ala2 the chain carries N-acetylalanine. At Lys4 the chain carries N6-acetyllysine. Ser12 is subject to Phosphoserine. The residue at position 15 (Lys15) is an N6-acetyllysine. Phosphothreonine occurs at positions 21, 23, and 34. Lys39 carries the N6-acetyllysine modification. Ser41 is modified (phosphoserine).

It belongs to the thymosin beta family.

The protein localises to the cytoplasm. The protein resides in the cytoskeleton. Plays an important role in the organization of the cytoskeleton. Binds to and sequesters actin monomers (G actin) and therefore inhibits actin polymerization. This Rattus norvegicus (Rat) protein is Thymosin beta-10 (Tmsb10).